The sequence spans 324 residues: Signal peptidase I (324 aa).

The Periplasmic portion of the chain corresponds to 1–3 (MAN). The chain crosses the membrane as a helical span at residues 4-22 (MFALILVIATLVTGILWCV). At 23-58 (DKFVFAPKRRARQAAAQTASGDALDNATLNKVAPKP) the chain is on the cytoplasmic side. The chain crosses the membrane as a helical span at residues 59-77 (GWLETGASVFPVLAIVLIV). At 78–324 (RSFLYEPFQI…VRLSRIGGIH (247 aa)) the chain is on the periplasmic side. Active-site residues include serine 91 and lysine 146.

It belongs to the peptidase S26 family.

It is found in the cell inner membrane. It catalyses the reaction Cleavage of hydrophobic, N-terminal signal or leader sequences from secreted and periplasmic proteins.. This chain is Signal peptidase I (lepB), found in Salmonella typhi.